A 39-amino-acid chain; its full sequence is Cytochrome b559 subunit beta (39 aa).

The chain crosses the membrane as a helical span at residues 14-30 (WLAVHGLAVPTVSFLGS). Histidine 18 is a heme binding site.

The protein belongs to the PsbE/PsbF family. In terms of assembly, heterodimer of an alpha subunit and a beta subunit. PSII is composed of 1 copy each of membrane proteins PsbA, PsbB, PsbC, PsbD, PsbE, PsbF, PsbH, PsbI, PsbJ, PsbK, PsbL, PsbM, PsbT, PsbX, PsbY, PsbZ, Psb30/Ycf12, at least 3 peripheral proteins of the oxygen-evolving complex and a large number of cofactors. It forms dimeric complexes. It depends on heme b as a cofactor.

The protein localises to the plastid. It is found in the chloroplast thylakoid membrane. This b-type cytochrome is tightly associated with the reaction center of photosystem II (PSII). PSII is a light-driven water:plastoquinone oxidoreductase that uses light energy to abstract electrons from H(2)O, generating O(2) and a proton gradient subsequently used for ATP formation. It consists of a core antenna complex that captures photons, and an electron transfer chain that converts photonic excitation into a charge separation. The chain is Cytochrome b559 subunit beta from Muilla maritima (Sea muilla).